We begin with the raw amino-acid sequence, 306 residues long: Probable cobalamin biosynthesis protein CobD (306 aa).

Transmembrane regions (helical) follow at residues 17-37 (IGEP…IIFF), 54-74 (LFGF…AYEI), 88-108 (ISLY…IEFS), 155-175 (ITDS…PGAF), 207-227 (ILNF…APFY), and 286-306 (SLKA…VLLM).

It belongs to the CobD/CbiB family.

It localises to the cell membrane. The protein operates within cofactor biosynthesis; adenosylcobalamin biosynthesis. Converts cobyric acid to cobinamide by the addition of aminopropanol on the F carboxylic group. The sequence is that of Probable cobalamin biosynthesis protein CobD from Methanococcus maripaludis (strain C5 / ATCC BAA-1333).